The sequence spans 351 residues: Thiamine-phosphate synthase (351 aa).

Positions 1 to 127 (MQNLAPASEG…SETAKALRYR (127 aa)) are unknown. The tract at residues 64–84 (RAARQTDQDPGTALSHPQERD) is disordered. Residues 128–351 (VYILEQALTL…LRRLSQGEPS (224 aa)) form a thiamine-phosphate synthase region. 4-amino-2-methyl-5-(diphosphooxymethyl)pyrimidine-binding positions include 178 to 182 (QYRDK) and N210. 2 residues coordinate Mg(2+): D211 and D230. S249 serves as a coordination point for 4-amino-2-methyl-5-(diphosphooxymethyl)pyrimidine. 275 to 277 (TPT) lines the 2-[(2R,5Z)-2-carboxy-4-methylthiazol-5(2H)-ylidene]ethyl phosphate pocket. K278 is a binding site for 4-amino-2-methyl-5-(diphosphooxymethyl)pyrimidine. G305 serves as a coordination point for 2-[(2R,5Z)-2-carboxy-4-methylthiazol-5(2H)-ylidene]ethyl phosphate.

The protein belongs to the thiamine-phosphate synthase family. The cofactor is Mg(2+).

The catalysed reaction is 2-[(2R,5Z)-2-carboxy-4-methylthiazol-5(2H)-ylidene]ethyl phosphate + 4-amino-2-methyl-5-(diphosphooxymethyl)pyrimidine + 2 H(+) = thiamine phosphate + CO2 + diphosphate. It carries out the reaction 2-(2-carboxy-4-methylthiazol-5-yl)ethyl phosphate + 4-amino-2-methyl-5-(diphosphooxymethyl)pyrimidine + 2 H(+) = thiamine phosphate + CO2 + diphosphate. It catalyses the reaction 4-methyl-5-(2-phosphooxyethyl)-thiazole + 4-amino-2-methyl-5-(diphosphooxymethyl)pyrimidine + H(+) = thiamine phosphate + diphosphate. Its pathway is cofactor biosynthesis; thiamine diphosphate biosynthesis; thiamine phosphate from 4-amino-2-methyl-5-diphosphomethylpyrimidine and 4-methyl-5-(2-phosphoethyl)-thiazole: step 1/1. Functionally, condenses 4-methyl-5-(beta-hydroxyethyl)thiazole monophosphate (THZ-P) and 2-methyl-4-amino-5-hydroxymethyl pyrimidine pyrophosphate (HMP-PP) to form thiamine monophosphate (TMP). In Thermosynechococcus vestitus (strain NIES-2133 / IAM M-273 / BP-1), this protein is Thiamine-phosphate synthase.